Consider the following 208-residue polypeptide: Thymidylate kinase (208 aa).

10-17 (GPDGSGKT) serves as a coordination point for ATP.

Belongs to the thymidylate kinase family.

The catalysed reaction is dTMP + ATP = dTDP + ADP. In terms of biological role, phosphorylation of dTMP to form dTDP in both de novo and salvage pathways of dTTP synthesis. The protein is Thymidylate kinase of Listeria monocytogenes serotype 4b (strain CLIP80459).